A 332-amino-acid chain; its full sequence is Transcription initiation factor IIB 2 (332 aa).

A compositionally biased stretch (polar residues) spans 1-10 (MSDTITTRTY). The tract at residues 1 to 36 (MSDTITTRTYSADAKSRDVRPRESERDETQQDETQV) is disordered. The segment covering 14 to 29 (AKSRDVRPRESERDET) has biased composition (basic and acidic residues). A TFIIB-type zinc finger spans residues 33 to 63 (ETQVCPECSGHLVTDEEHGETICEDCGLVVE). Zn(2+) is bound by residues Cys37, Cys40, Cys55, and Cys58. Positions 77–106 (DSAERDSKSRVGAPTTKMMHDKGLSTNIGW) are disordered. A run of 2 repeats spans residues 149-232 (GEID…VREL) and 243-324 (QYVP…ELLE).

This sequence belongs to the TFIIB family.

Stabilizes TBP binding to an archaeal box-A promoter. Also responsible for recruiting RNA polymerase II to the pre-initiation complex (DNA-TBP-TFIIB). This chain is Transcription initiation factor IIB 2, found in Haloferax volcanii (strain ATCC 29605 / DSM 3757 / JCM 8879 / NBRC 14742 / NCIMB 2012 / VKM B-1768 / DS2) (Halobacterium volcanii).